The chain runs to 435 residues: UDP-N-acetylmuramate--L-alanine ligase (435 aa).

108 to 114 is an ATP binding site; the sequence is GAHGKST.

It belongs to the MurCDEF family.

Its subcellular location is the cytoplasm. It carries out the reaction UDP-N-acetyl-alpha-D-muramate + L-alanine + ATP = UDP-N-acetyl-alpha-D-muramoyl-L-alanine + ADP + phosphate + H(+). Its pathway is cell wall biogenesis; peptidoglycan biosynthesis. Functionally, cell wall formation. In Campylobacter curvus (strain 525.92), this protein is UDP-N-acetylmuramate--L-alanine ligase.